The primary structure comprises 142 residues: Hemoglobin F-I (142 aa).

Residues 2–142 (GLTTAQIKAI…AAGVLVAAMK (141 aa)) enclose the Globin domain. His-95 contacts heme b.

The protein belongs to the globin family. In terms of assembly, homotetramer.

Functionally, hemoglobin F-I appears to function in storage, rather than transport of oxygen. The sequence is that of Hemoglobin F-I from Urechis caupo (Innkeeper worm).